The sequence spans 535 residues: Peptide chain release factor 3 (535 aa).

The tr-type G domain occupies 8–276 (ARRRTFAIIS…ALVEQAPPPG (269 aa)). GTP contacts are provided by residues 17–24 (SHPDAGKT), 85–89 (DTPGH), and 139–142 (NKMD).

Belongs to the TRAFAC class translation factor GTPase superfamily. Classic translation factor GTPase family. PrfC subfamily.

The protein resides in the cytoplasm. Its function is as follows. Increases the formation of ribosomal termination complexes and stimulates activities of RF-1 and RF-2. It binds guanine nucleotides and has strong preference for UGA stop codons. It may interact directly with the ribosome. The stimulation of RF-1 and RF-2 is significantly reduced by GTP and GDP, but not by GMP. This is Peptide chain release factor 3 from Bordetella petrii (strain ATCC BAA-461 / DSM 12804 / CCUG 43448).